The primary structure comprises 101 residues: Omega-scoloptoxin(10)-Ssd1b (101 aa).

The first 23 residues, 1-23 (MNKLTIIFFTILLLTYIIVEKEA), serve as a signal peptide directing secretion.

Contains 3 disulfide bonds. Expressed by the venom gland.

The protein localises to the secreted. In terms of biological role, voltage-gated calcium channel inhibitor. The chain is Omega-scoloptoxin(10)-Ssd1b from Scolopendra dehaani (Thai centipede).